Consider the following 211-residue polypeptide: SsrA-binding protein (211 aa).

The disordered stretch occupies residues 168 to 211 (KHRLRRPRAQRNTQRSVTPRRTRENKNVRGSKARSARRNVRREN). The span at 177–186 (QRNTQRSVTP) shows a compositional bias: polar residues. A compositionally biased stretch (basic residues) spans 196-211 (RGSKARSARRNVRREN).

Belongs to the SmpB family.

The protein localises to the cytoplasm. Functionally, required for rescue of stalled ribosomes mediated by trans-translation. Binds to transfer-messenger RNA (tmRNA), required for stable association of tmRNA with ribosomes. tmRNA and SmpB together mimic tRNA shape, replacing the anticodon stem-loop with SmpB. tmRNA is encoded by the ssrA gene; the 2 termini fold to resemble tRNA(Ala) and it encodes a 'tag peptide', a short internal open reading frame. During trans-translation Ala-aminoacylated tmRNA acts like a tRNA, entering the A-site of stalled ribosomes, displacing the stalled mRNA. The ribosome then switches to translate the ORF on the tmRNA; the nascent peptide is terminated with the 'tag peptide' encoded by the tmRNA and targeted for degradation. The ribosome is freed to recommence translation, which seems to be the essential function of trans-translation. The protein is SsrA-binding protein of Tropheryma whipplei (strain Twist) (Whipple's bacillus).